The primary structure comprises 207 residues: Chloramphenicol acetyltransferase (207 aa).

The active-site Proton acceptor is His186.

The protein belongs to the chloramphenicol acetyltransferase family. Homotrimer.

The catalysed reaction is chloramphenicol + acetyl-CoA = chloramphenicol 3-acetate + CoA. This enzyme is an effector of chloramphenicol resistance in bacteria. In Campylobacter coli, this protein is Chloramphenicol acetyltransferase.